The following is a 378-amino-acid chain: SPbeta prophage-derived uncharacterized protein YorJ (378 aa).

This chain is SPbeta prophage-derived uncharacterized protein YorJ (yorJ), found in Bacillus subtilis (strain 168).